A 409-amino-acid polypeptide reads, in one-letter code: Nucleoprotein (409 aa).

4 disordered regions span residues 1-32, 44-69, 121-194, and 238-259; these read MASG…SSGN, LNSP…QQHG, ADVK…GSED, and VDQV…DKMN. Residues 29 to 160 form an RNA-binding region; the sequence is SSGNASWFQA…GNFRWDFIPL (132 aa). The CoV N NTD domain occupies 31–156; the sequence is GNASWFQAIK…GGPDGNFRWD (126 aa). Residues 162-179 are compositionally biased toward low complexity; that stretch reads RGRSGRSTAASSAASSRP. Composition is skewed to basic and acidic residues over residues 180 to 192 and 247 to 259; these read PSRE…RSGS and KGKE…DKMN. Residues Ser190 and Ser192 each carry the phosphoserine; by host modification. The CoV N CTD domain occupies 215-331; sequence TKAKADEMAH…QCVDGVGTRP (117 aa). The interval 226–333 is dimerization; the sequence is RYCKRTIPPG…VDGVGTRPKD (108 aa). A disulfide bridge connects residues Cys320 and Cys323. The tract at residues 326–409 is disordered; the sequence is GVGTRPKDDE…GDSALGENEL (84 aa). The span at 341 to 356 shows a compositional bias: low complexity; sequence RSSSRPATRTSSPAPR. The segment covering 358 to 367 has biased composition (basic residues); the sequence is QRLKKEKRPK. Basic and acidic residues predominate over residues 368–384; sequence KQDDEVDKALTSDEERN. Residue Thr378 is modified to Phosphothreonine; by host. Ser379 is subject to Phosphoserine; by host.

The protein belongs to the gammacoronavirus nucleocapsid protein family. In terms of assembly, homooligomer. Both monomeric and oligomeric forms interact with RNA. Interacts with protein M. Interacts with NSP3; this interaction serves to tether the genome to the newly translated replicase-transcriptase complex at a very early stage of infection. In terms of processing, ADP-ribosylated. The ADP-ribosylation is retained in the virion during infection. Post-translationally, phosphorylated on serine and threonine residues.

The protein localises to the virion. The protein resides in the host endoplasmic reticulum-Golgi intermediate compartment. It is found in the host Golgi apparatus. Functionally, packages the positive strand viral genome RNA into a helical ribonucleocapsid (RNP) and plays a fundamental role during virion assembly through its interactions with the viral genome and membrane protein M. Plays an important role in enhancing the efficiency of subgenomic viral RNA transcription as well as viral replication. The sequence is that of Nucleoprotein from Gallus gallus (Chicken).